Reading from the N-terminus, the 176-residue chain is Inner membrane-spanning protein YciB (176 aa).

5 consecutive transmembrane segments (helical) span residues 23–43 (MIAA…FLYW), 50–70 (TMQW…IVLG), 74–94 (FIMW…WGSH), 119–139 (LTYM…FVFT), and 150–170 (MFGS…YLST).

This sequence belongs to the YciB family.

Its subcellular location is the cell inner membrane. Plays a role in cell envelope biogenesis, maintenance of cell envelope integrity and membrane homeostasis. The protein is Inner membrane-spanning protein YciB of Neisseria meningitidis serogroup A / serotype 4A (strain DSM 15465 / Z2491).